A 519-amino-acid polypeptide reads, in one-letter code: tRNA pseudouridine synthase Pus10 (519 aa).

The interval 70-98 is disordered; sequence NENEEIDENTKNNEDTENKADDKSQSNEE. Basic and acidic residues predominate over residues 77–98; the sequence is ENTKNNEDTENKADDKSQSNEE. Residues 144-265 enclose the THUMP domain; that stretch reads NESEENESNI…NQKIYLQINP (122 aa). Aspartate 334 acts as the Nucleophile in catalysis. Substrate is bound by residues tyrosine 398 and tyrosine 476.

Belongs to the pseudouridine synthase Pus10 family.

It carries out the reaction uridine(54) in tRNA = pseudouridine(54) in tRNA. The catalysed reaction is uridine(55) in tRNA = pseudouridine(55) in tRNA. In terms of biological role, responsible for synthesis of pseudouridine from uracil-54 and uracil-55 in the psi GC loop of transfer RNAs. This Methanococcus voltae (strain ATCC BAA-1334 / A3) protein is tRNA pseudouridine synthase Pus10.